The chain runs to 302 residues: MHALLQEILDEVRPLLGRGRVADYIPALADVPADQLGIAVCSAEGELFEAGDARTPFSIQSISKVFSLVQAIGHRGESLWERLGHEPSGQPFNSLVQLEFERGRPRNPFINAGALVICDVNQSRFATPELSMRDFVRHLSGNPLIVSDTKVAESEYQHRARNAAMAYLMQAFGNFHNDVEAVLRSYFHHCALRMNCVDLARAFGFLARDGICPQGGEAVLSPRQTKQVNAIMATSGLYDEAGNFAYRVGLPGKSGVGGGIVAVVPGRFTVCVWSPELNAAGNSLIGMAALEALSQRIGWSVF.

Substrate contacts are provided by S61, N111, E155, N162, Y186, Y238, and V256.

This sequence belongs to the glutaminase family. In terms of assembly, homotetramer.

The catalysed reaction is L-glutamine + H2O = L-glutamate + NH4(+). This Stutzerimonas stutzeri (strain A1501) (Pseudomonas stutzeri) protein is Glutaminase.